The chain runs to 141 residues: Hemoglobin subunit alpha (141 aa).

In terms of domain architecture, Globin spans 1 to 141; the sequence is VLSPADKTNI…VSTVLTSKYR (141 aa). Ser3 carries the phosphoserine modification. Lys7 carries the N6-succinyllysine modification. Thr8 carries the post-translational modification Phosphothreonine. Lys11 is modified (N6-succinyllysine). Lys16 carries the N6-acetyllysine; alternate modification. Lys16 bears the N6-succinyllysine; alternate mark. Position 24 is a phosphotyrosine (Tyr24). At Ser35 the chain carries Phosphoserine. Lys40 carries the N6-succinyllysine modification. Ser49 carries the phosphoserine modification. Residue His58 coordinates O2. Heme b is bound at residue His87. At Ser102 the chain carries Phosphoserine. A Phosphothreonine modification is found at Thr108. A Phosphoserine modification is found at Ser124. Phosphothreonine occurs at positions 134 and 137. The residue at position 138 (Ser138) is a Phosphoserine.

This sequence belongs to the globin family. In terms of assembly, heterotetramer of two alpha chains and two beta chains. Red blood cells.

Functionally, involved in oxygen transport from the lung to the various peripheral tissues. In terms of biological role, hemopressin acts as an antagonist peptide of the cannabinoid receptor CNR1. Hemopressin-binding efficiently blocks cannabinoid receptor CNR1 and subsequent signaling. This Chrysocyon brachyurus (Maned wolf) protein is Hemoglobin subunit alpha (HBA).